The chain runs to 1262 residues: Unconventional myosin-VI (1262 aa).

The Myosin N-terminal SH3-like domain occupies 2–53; the sequence is EDGKPVWAPHPTDGFQMGNIVDIGPDSLTIEPLNQKGKTFLALINQVFPAEE. One can recognise a Myosin motor domain in the interval 57–771; that stretch reads KDVEDNCSLM…KFAEFDQIMK (715 aa). An ATP-binding site is contributed by 151–158; the sequence is GESGAGKT. Ser267 is modified (phosphoserine). Residues 273–317 are responsible for slow ATPase activity; it reads YLNRGCTRFFANKETDKQILQNRKSPEYVKAGSLKDPLLDDHGDF. Thr405 is subject to Phosphothreonine. The residue at position 604 (Ser604) is a Phosphoserine. Actin-binding regions lie at residues 651 to 673 and 665 to 672; these read LNLLLDKLRSTGASFIRCIKPNL and FIRCIKPN. The tract at residues 782-810 is required for binding calmodulin; sequence KRVNLWLVCSRWKKVQWCSLSVIKLKNKI. An IQ domain is found at 814 to 834; it reads AEACIKMQKTIRMWLCKRRHK. A three-helix bundle region spans residues 835–916; it reads PRIDGLVKVG…EDLLSALQKK (82 aa). The stretch at 864–984 forms a coiled coil; it reads KPEVNRQIKN…EDDEKRIQAE (121 aa). Residues 917-984 are SAH; it reads KQQEEEAERL…EDDEKRIQAE (68 aa). The segment at 933–955 is disordered; the sequence is MEKERKRREEDEERRRKEEEERR. Residue Ser1025 is modified to Phosphoserine. The interval 1034–1253 is interaction with TAX1BP1 and CALCOCO2/NDP52; sequence LRRGPAVQAT…ESRQARPTYA (220 aa). An interaction with OPTN region spans residues 1084–1086; that stretch reads RRL. Ser1123 is subject to Phosphoserine. Residues 1125–1253 are interaction with TOM1; that stretch reads QQNPAAQLPA…ESRQARPTYA (129 aa).

This sequence belongs to the TRAFAC class myosin-kinesin ATPase superfamily. Myosin family. Homodimer; dimerization seems to implicate the unfolding of the three-helix bundle region creating an additional calmodulin binding site, and cargo binding. Able to function as a monomer under specific conditions in vitro. Forms a complex with CFTR and DAB2 in the apical membrane of epithelial cells. Component of the DISP/DOCK7-induced septin displacement complex, at least composed of DOCK7, LRCH3 and MYO6. Binding to calmodulin through a unique insert, not found in other myosins, located in the neck region between the motor domain and the IQ domain appears to contribute to the directionality reversal. This interaction occurs only if the C-terminal lobe of calmodulin is occupied by calcium. Interaction with F-actin/ACTN1 occurs only at the apical brush border domain of the proximal tubule cells. Interacts with DAB2. In vitro, the C-terminal globular tail binds a C-terminal region of DAB2. Interacts with CFTR. Interacts with CABP5. Interacts (via residues 1128-1256) with TOM1 (via residues 392-463). Interacts (via residues 1060-1285) with OPTN. Interacts (via residues 1060-1285) with TAX1BP1 and CALCOCO2/NDP52. Interacts with TOM1L2. Interacts with CLIC5; may work together in a complex which also includes RDX and MYO6 to stabilize linkages between the plasma membrane and subjacent actin cytoskeleton at the base of stereocilia. Phosphorylation in the motor domain, induced by EGF, results in translocation of MYO6 from the cell surface to membrane ruffles and affects F-actin dynamics. Phosphorylated in vitro by p21-activated kinase (PAK). Within the cochlea, expressed specifically within the sensory hair cells (at protein level). Expressed in the inner and outer plexiform layer of the retina (at protein level). Widely expressed. Expressed in the brain, kidney, liver, and testis.

It localises to the golgi apparatus. The protein localises to the trans-Golgi network membrane. The protein resides in the nucleus. Its subcellular location is the cytoplasm. It is found in the perinuclear region. It localises to the membrane. The protein localises to the clathrin-coated pit. The protein resides in the cytoplasmic vesicle. Its subcellular location is the clathrin-coated vesicle. It is found in the cell projection. It localises to the filopodium. The protein localises to the ruffle membrane. The protein resides in the microvillus. Its subcellular location is the cytosol. Myosins are actin-based motor molecules with ATPase activity. Unconventional myosins serve in intracellular movements. Myosin 6 is a reverse-direction motor protein that moves towards the minus-end of actin filaments. Has slow rate of actin-activated ADP release due to weak ATP binding. Functions in a variety of intracellular processes such as vesicular membrane trafficking and cell migration. Required for the structural integrity of the Golgi apparatus via the p53-dependent pro-survival pathway. Appears to be involved in a very early step of clathrin-mediated endocytosis in polarized epithelial cells. Together with TOM1, mediates delivery of endocytic cargo to autophagosomes thereby promoting autophagosome maturation and driving fusion with lysosomes. Links TOM1 with autophagy receptors, such as TAX1BP1; CALCOCO2/NDP52 and OPTN. May act as a regulator of F-actin dynamics. As part of the DISP complex, may regulate the association of septins with actin and thereby regulate the actin cytoskeleton. May play a role in transporting DAB2 from the plasma membrane to specific cellular targets. May play a role in the extension and network organization of neurites. Required for structural integrity of inner ear hair cells. Required for the correct localization of CLIC5 and RDX at the stereocilium base. Modulates RNA polymerase II-dependent transcription. The chain is Unconventional myosin-VI (Myo6) from Mus musculus (Mouse).